The primary structure comprises 86 residues: Cell division topological specificity factor (86 aa).

The protein belongs to the MinE family.

Functionally, prevents the cell division inhibition by proteins MinC and MinD at internal division sites while permitting inhibition at polar sites. This ensures cell division at the proper site by restricting the formation of a division septum at the midpoint of the long axis of the cell. The polypeptide is Cell division topological specificity factor (Shewanella sediminis (strain HAW-EB3)).